We begin with the raw amino-acid sequence, 146 residues long: MVNGINHMTFSVSNMDKAVSFYKHVFMEAPLVLGEKTAYFTIGGTWLALNLQPDIDRKEIRQSYTHIAFSIEESQLDAFYTRLLEAGADILPGRKRQVETEGKSIYFRDPDGHLLEVHTGTLAERLAHYEKTAPDMLVNIDEQNKK.

Positions 4-120 (GINHMTFSVS…DGHLLEVHTG (117 aa)) constitute a VOC domain. Residues His-7, His-66, and Glu-116 each coordinate Mg(2+). The Proton donor/acceptor role is filled by Glu-116.

The protein belongs to the fosfomycin resistance protein family. FosB subfamily. In terms of assembly, homodimer. Mg(2+) is required as a cofactor.

The protein localises to the cytoplasm. Metallothiol transferase which confers resistance to fosfomycin by catalyzing the addition of a thiol cofactor to fosfomycin. L-cysteine is probably the physiological thiol donor. This chain is Metallothiol transferase FosB, found in Shouchella clausii (strain KSM-K16) (Alkalihalobacillus clausii).